The chain runs to 118 residues: Large ribosomal subunit protein bL20 (118 aa).

Belongs to the bacterial ribosomal protein bL20 family.

Binds directly to 23S ribosomal RNA and is necessary for the in vitro assembly process of the 50S ribosomal subunit. It is not involved in the protein synthesizing functions of that subunit. In Macrococcus caseolyticus (strain JCSC5402) (Macrococcoides caseolyticum), this protein is Large ribosomal subunit protein bL20.